The following is a 716-amino-acid chain: Astellifadiene synthase (716 aa).

The segment at 1–323 (MEFKYSTLID…SPRYYTDAKF (323 aa)) is terpene cyclase. Aspartate 92 contacts Mg(2+). Substrate contacts are provided by residues aspartate 92, 179–182 (RIYD), asparagine 223, 227–231 (SWEKE), and 316–317 (RY). A DDXXD 1 motif is present at residues 92–96 (DDVID). The short motif at 223–231 (NDLVSWEKE) is the NSE/DTE element. The tract at residues 324-713 (SQRQLDWIKN…FQLKLILQFL (390 aa)) is prenyltransferase. Isopentenyl diphosphate contacts are provided by lysine 436, arginine 439, and histidine 468. Aspartate 475 and aspartate 479 together coordinate Mg(2+). Positions 475–479 (DDVED) match the DDXXD 2 motif. A dimethylallyl diphosphate-binding site is contributed by arginine 484. Arginine 485 contributes to the isopentenyl diphosphate binding site. Lysine 562, threonine 563, glutamine 598, asparagine 605, lysine 615, and lysine 625 together coordinate dimethylallyl diphosphate.

It in the N-terminal section; belongs to the terpene synthase family. The protein in the C-terminal section; belongs to the FPP/GGPP synthase family. Hexamer. It depends on Mg(2+) as a cofactor.

The enzyme catalyses isopentenyl diphosphate + (2E,6E)-farnesyl diphosphate = (2E,6E,10E)-geranylgeranyl diphosphate + diphosphate. The catalysed reaction is isopentenyl diphosphate + (2E,6E,10E)-geranylgeranyl diphosphate = (2E,6E,10E,14E)-geranylfarnesyl diphosphate + diphosphate. It catalyses the reaction (2E,6E,10E,14E)-geranylfarnesyl diphosphate = astellifadiene + diphosphate. It functions in the pathway secondary metabolite biosynthesis; terpenoid biosynthesis. Its function is as follows. Bifunctional terpene synthase that converts dimethylallyl diphosphate (DMAPP) and isopentenyl diphosphate (IPP) into astellifadiene. The C-terminal prenyltransferase (PT) domain of EvAS catalyzes formation of geranylfarnesyl pyrophosphate (GFPP), whereas the N-terminal terpene cyclase (TC) domain catalyzes the cyclization of GFPP to astellifadiene. The protein is Astellifadiene synthase of Emericella variicolor (Aspergillus stellatus).